Here is a 141-residue protein sequence, read N- to C-terminus: Sperm-associated microtubule inner protein 10 (141 aa).

A compositionally biased stretch (basic and acidic residues) spans 1–16; it reads MASEKDDGPALPKLDD. Residues 1 to 33 are disordered; sequence MASEKDDGPALPKLDDDNQTAENTCKPAEEQPQ.

Microtubule inner protein component of sperm flagellar doublet microtubules. Expressed predominantly in the testis.

The protein resides in the cytoplasm. The protein localises to the cytoskeleton. It is found in the flagellum axoneme. Microtubule inner protein (MIP) part of the dynein-decorated doublet microtubules (DMTs) in flagellum axoneme, which is required for flagellum beating. May serve to reinforce and thus stabilize the microtubule structure in the sperm flagella. Involved in the regulation of sperm motility. The protein is Sperm-associated microtubule inner protein 10 (Spmip10) of Mus musculus (Mouse).